The following is a 238-amino-acid chain: Ditrans,polycis-undecaprenyl-diphosphate synthase ((2E,6E)-farnesyl-diphosphate specific) (238 aa).

The active site involves Asp14. Residue Asp14 participates in Mg(2+) binding. Residues 15 to 18, Trp19, Arg27, His31, and 59 to 61 contribute to the substrate site; these read GNGR and SSE. Catalysis depends on Asn62, which acts as the Proton acceptor. Substrate contacts are provided by residues Trp63, Arg65, Arg182, and 188-190; that span reads RIS. Glu201 is a binding site for Mg(2+).

It belongs to the UPP synthase family. In terms of assembly, homodimer. Mg(2+) is required as a cofactor.

The catalysed reaction is 8 isopentenyl diphosphate + (2E,6E)-farnesyl diphosphate = di-trans,octa-cis-undecaprenyl diphosphate + 8 diphosphate. Catalyzes the sequential condensation of isopentenyl diphosphate (IPP) with (2E,6E)-farnesyl diphosphate (E,E-FPP) to yield (2Z,6Z,10Z,14Z,18Z,22Z,26Z,30Z,34E,38E)-undecaprenyl diphosphate (di-trans,octa-cis-UPP). UPP is the precursor of glycosyl carrier lipid in the biosynthesis of bacterial cell wall polysaccharide components such as peptidoglycan and lipopolysaccharide. The chain is Ditrans,polycis-undecaprenyl-diphosphate synthase ((2E,6E)-farnesyl-diphosphate specific) from Legionella pneumophila (strain Paris).